The following is a 308-amino-acid chain: MEDAIYVAVNQDVRESKKTLLWALKNLQVKKIFLLHVHLPFSLTTSSSRLEQSEIDAIQDSELNTSVNSLYKYRDICINKGVNEKDVDTSMISGHDVGEGIVELIYQNIITNLVMGAAADPHYSRGMSITSRKAEYVSQHAPHSCKIWFICKGKLIKQRERSFYLGNPSDSFSEFSTSAEKPISKGRRRDEEEEPESPKEHPGWILEPEESPKKGRKETIEKSKSNESDEDPRLEDFKCPISMEIMRDPHVAADGFTYEAEEFRKWLRSGGRTSPKTNKPLENHNLVPNHTLRIIIKDWLEKNPNYKR.

The segment at Phe-172–Glu-235 is disordered. The segment covering Glu-210–Glu-227 has biased composition (basic and acidic residues). One can recognise a U-box domain in the interval Pro-232–Tyr-306.

The catalysed reaction is S-ubiquitinyl-[E2 ubiquitin-conjugating enzyme]-L-cysteine + [acceptor protein]-L-lysine = [E2 ubiquitin-conjugating enzyme]-L-cysteine + N(6)-ubiquitinyl-[acceptor protein]-L-lysine.. Its pathway is protein modification; protein ubiquitination. In terms of biological role, functions as an E3 ubiquitin ligase. The chain is U-box domain-containing protein 54 (PUB54) from Arabidopsis thaliana (Mouse-ear cress).